The primary structure comprises 403 residues: RNA-binding motif, single-stranded-interacting protein 1 (403 aa).

Residues 30-56 form a disordered region; sequence PAHPMAPPSPSTTSSNNNSSSSSNSGW. Low complexity predominate over residues 40–54; the sequence is STTSSNNNSSSSSNS. RRM domains are found at residues 62–135 and 141–226; these read TNLY…MAKQ and TNLY…FADG. The residue at position 208 (Thr-208) is a Phosphothreonine.

The protein localises to the nucleus. Single-stranded DNA binding protein that interacts with the region upstream of the C-myc gene. Binds specifically to the DNA sequence motif 5'-[AT]CT[AT][AT]T-3'. Probably has a role in DNA replication. The chain is RNA-binding motif, single-stranded-interacting protein 1 (RBMS1) from Bos taurus (Bovine).